Consider the following 869-residue polypeptide: Leucine--tRNA ligase (869 aa).

The 'HIGH' region motif lies at 42-52; that stretch reads PYPSGKLHMGH. The 'KMSKS' region signature appears at 624–628; it reads TMSKS. Lysine 627 serves as a coordination point for ATP.

It belongs to the class-I aminoacyl-tRNA synthetase family.

It localises to the cytoplasm. The enzyme catalyses tRNA(Leu) + L-leucine + ATP = L-leucyl-tRNA(Leu) + AMP + diphosphate. The polypeptide is Leucine--tRNA ligase (Nitrosomonas europaea (strain ATCC 19718 / CIP 103999 / KCTC 2705 / NBRC 14298)).